Reading from the N-terminus, the 186-residue chain is MQRWTLWAAAFLTLHSAQAFPQTDISISPALPELPLPSLCPLFWMEFKGHCYRFFPLNKTWAEADLYCSEFSVGRKSAKLASIHSWEENVFVYDLVNSCVPGIPADVWTGLHDHRQEGQFEWTDGSSYDYSYWDGSQPDDGVHADPEEEDCVQIWYRPTSALRSWNDNTCSRKFPFVCKIPSLTIH.

The first 19 residues, 1–19, serve as a signal peptide directing secretion; that stretch reads MQRWTLWAAAFLTLHSAQA. The 133-residue stretch at 47–179 folds into the C-type lectin domain; the sequence is FKGHCYRFFP…CSRKFPFVCK (133 aa). An N-linked (GlcNAc...) asparagine glycan is attached at Asn-58. 2 disulfides stabilise this stretch: Cys-68–Cys-178 and Cys-151–Cys-170.

Its subcellular location is the secreted. The protein is C-type lectin domain family 19 member A of Homo sapiens (Human).